Consider the following 457-residue polypeptide: Multidrug resistance protein MdtK (457 aa).

A run of 12 helical transmembrane segments spans residues 11–31 (LLALAIPVILAQVAQTAMGFV), 53–73 (IWLPAILFGHGLLLALTPVVA), 93–113 (WLAGFVSVLIMVVLWNAGYII), 127–147 (AVGYLRALLWGAPGYLFFQVA), 160–180 (GMVMGFIGLLVNIPVNYIFIY), 191–211 (VGCGVATASVYWVMFASMLWW), 243–263 (LPIALALFFEVTLFAVVALLV), 276–296 (IALNFSSLMFVLPLSLAAAVT), 316–336 (RTGVGVGVCLAVFTAIFTVLM), 350–370 (VVLLASHLMLLAAIYQISDSI), 387–407 (IFFITFTAYWVLGLPSGYLLA), and 418–438 (PAGFWCGFIIGLTSAAIMMML).

This sequence belongs to the multi antimicrobial extrusion (MATE) (TC 2.A.66.1) family. MdtK subfamily.

It is found in the cell inner membrane. Its function is as follows. Multidrug efflux pump that functions probably as a Na(+)/drug antiporter. This Klebsiella pneumoniae (strain 342) protein is Multidrug resistance protein MdtK.